A 638-amino-acid polypeptide reads, in one-letter code: Threonine--tRNA ligase (638 aa).

A TGS domain is found at 1 to 61 (MPDIKLPDGS…EQNADLAIIT (61 aa)). A catalytic region spans residues 242–533 (DHRRLGKQYD…LIENFAGALP (292 aa)). Zn(2+) is bound by residues Cys333, His384, and His510.

This sequence belongs to the class-II aminoacyl-tRNA synthetase family. In terms of assembly, homodimer. It depends on Zn(2+) as a cofactor.

It localises to the cytoplasm. The enzyme catalyses tRNA(Thr) + L-threonine + ATP = L-threonyl-tRNA(Thr) + AMP + diphosphate + H(+). In terms of biological role, catalyzes the attachment of threonine to tRNA(Thr) in a two-step reaction: L-threonine is first activated by ATP to form Thr-AMP and then transferred to the acceptor end of tRNA(Thr). Also edits incorrectly charged L-seryl-tRNA(Thr). In Dechloromonas aromatica (strain RCB), this protein is Threonine--tRNA ligase.